The chain runs to 101 residues: Signal recognition particle 19 kDa protein (101 aa).

The protein belongs to the SRP19 family. Part of the signal recognition particle protein translocation system, which is composed of SRP and FtsY. Archaeal SRP consists of a 7S RNA molecule of 300 nucleotides and two protein subunits: SRP54 and SRP19.

Its subcellular location is the cytoplasm. Functionally, involved in targeting and insertion of nascent membrane proteins into the cytoplasmic membrane. Binds directly to 7S RNA and mediates binding of the 54 kDa subunit of the SRP. This chain is Signal recognition particle 19 kDa protein, found in Thermofilum pendens (strain DSM 2475 / Hrk 5).